The following is a 227-amino-acid chain: tRNA (guanine-N(1)-)-methyltransferase (227 aa).

Residues glycine 107 and 127 to 132 (LGDFIL) each bind S-adenosyl-L-methionine.

Belongs to the RNA methyltransferase TrmD family. Homodimer.

The protein resides in the cytoplasm. It carries out the reaction guanosine(37) in tRNA + S-adenosyl-L-methionine = N(1)-methylguanosine(37) in tRNA + S-adenosyl-L-homocysteine + H(+). In terms of biological role, specifically methylates guanosine-37 in various tRNAs. The polypeptide is tRNA (guanine-N(1)-)-methyltransferase (Mesomycoplasma hyopneumoniae (strain 232) (Mycoplasma hyopneumoniae)).